The following is a 340-amino-acid chain: Phosphoribosylformylglycinamidine cyclo-ligase (340 aa).

It belongs to the AIR synthase family.

It is found in the cytoplasm. The catalysed reaction is 2-formamido-N(1)-(5-O-phospho-beta-D-ribosyl)acetamidine + ATP = 5-amino-1-(5-phospho-beta-D-ribosyl)imidazole + ADP + phosphate + H(+). It participates in purine metabolism; IMP biosynthesis via de novo pathway; 5-amino-1-(5-phospho-D-ribosyl)imidazole from N(2)-formyl-N(1)-(5-phospho-D-ribosyl)glycinamide: step 2/2. The chain is Phosphoribosylformylglycinamidine cyclo-ligase from Streptococcus agalactiae serotype Ia (strain ATCC 27591 / A909 / CDC SS700).